A 960-amino-acid chain; its full sequence is Isoleucine--tRNA ligase (960 aa).

The 'HIGH' region motif lies at 82–92; that stretch reads PYANGHIHIGH. Glutamate 606 serves as a coordination point for L-isoleucyl-5'-AMP. The short motif at 647–651 is the 'KMSKS' region element; that stretch reads KMSKS. Lysine 650 is a binding site for ATP. Positions 931, 934, 951, and 954 each coordinate Zn(2+).

This sequence belongs to the class-I aminoacyl-tRNA synthetase family. IleS type 1 subfamily. In terms of assembly, monomer. It depends on Zn(2+) as a cofactor.

It localises to the cytoplasm. It catalyses the reaction tRNA(Ile) + L-isoleucine + ATP = L-isoleucyl-tRNA(Ile) + AMP + diphosphate. In terms of biological role, catalyzes the attachment of isoleucine to tRNA(Ile). As IleRS can inadvertently accommodate and process structurally similar amino acids such as valine, to avoid such errors it has two additional distinct tRNA(Ile)-dependent editing activities. One activity is designated as 'pretransfer' editing and involves the hydrolysis of activated Val-AMP. The other activity is designated 'posttransfer' editing and involves deacylation of mischarged Val-tRNA(Ile). The polypeptide is Isoleucine--tRNA ligase (Gluconobacter oxydans (strain 621H) (Gluconobacter suboxydans)).